Reading from the N-terminus, the 109-residue chain is uncharacterized protein (109 aa).

The interval 36–109 (NSSNNLNNNN…KKKKKKRRVK (74 aa)) is disordered. Over residues 39 to 88 (NNLNNNNFNENNLKNNNNRNGNNNNNNNNNNNNNNNNNNNNNNNNNNNNN) the composition is skewed to low complexity. Positions 99–109 (QKKKKKKRRVK) are enriched in basic residues.

This is an uncharacterized protein from Dictyostelium discoideum (Social amoeba).